Here is a 93-residue protein sequence, read N- to C-terminus: UPF0390 protein C24B10.18 (93 aa).

The disordered stretch occupies residues 1–32 (MAQGEFKKKKNSSANKGGRVTKHSKNPKKGAR). Basic residues predominate over residues 19 to 31 (RVTKHSKNPKKGA).

This sequence belongs to the UPF0390 family.

In Schizosaccharomyces pombe (strain 972 / ATCC 24843) (Fission yeast), this protein is UPF0390 protein C24B10.18.